The sequence spans 162 residues: Protein archease (162 aa).

Ca(2+)-binding residues include D34, D161, and I162.

This sequence belongs to the archease family. Component of the tRNA-splicing ligase complex.

Its function is as follows. Component of the tRNA-splicing ligase complex required to facilitate the enzymatic turnover of catalytic subunit RTCB. Together with ddx1, acts by facilitating the guanylylation of RTCB, a key intermediate step in tRNA ligation. The polypeptide is Protein archease (zbtb8os) (Danio rerio (Zebrafish)).